A 104-amino-acid chain; its full sequence is Conantokin-P (104 aa).

A signal peptide spans 1 to 26 (MQLYTYLYLLVPLVTFHLILSTGTLA). The propeptide occupies 27–80 (HGGTLTERRSTDTTALKPEPVLLQKSDARSTDDNDKDRLTQMKRILKKRGNKAR). The tract at residues 29 to 87 (GTLTERRSTDTTALKPEPVLLQKSDARSTDDNDKDRLTQMKRILKKRGNKARGEEEHSK) is disordered. A compositionally biased stretch (basic and acidic residues) spans 52 to 66 (SDARSTDDNDKDRLT). Residues Glu83, Glu84, Glu90, Glu94, and Glu103 each carry the 4-carboxyglutamate modification. The a divalent metal cation site is built by Glu90 and Glu94. A disulfide bond links Cys91 and Cys104.

Belongs to the conotoxin B superfamily. As to expression, expressed by the venom duct.

It localises to the secreted. Conantokins inhibit N-methyl-D-aspartate (NMDA) receptors. This toxin has the highest potency for the NR2B/GRIN2B subunit, followed by NR2A/GRIN2A, NR2C/GRIN2C, and NR2D/GRIN2D subunits. This is Conantokin-P from Conus purpurascens (Purple cone).